Consider the following 292-residue polypeptide: MGQKVHPYSLRVKINKDWKSKWYFDKKLYSTILHEDFLIRLEIMKFLKGIKFDISDIEIIRNNPQKVTVVIVTPRPGSVIGLKGSNLEKIGQLLTKKISKKISIKIKEVKRPELDAQIIANGIAKQVENRVSYRKVLKSSLSTSMLKGAQGLKIKIAGRLGGAEIARSFEVKEGRVPLHTLRANIDYGFSEAQTTYGIIGVKVWLFKGEVLGRQTNSDAGQVINKKPFRERGESVKNFDKILNNREKANERQSRAALNKKDGLSKDETGLLNKLGSSFSKERIDSNEQNIGG.

The region spanning 39–110 is the KH type-2 domain; that stretch reads IRLEIMKFLK…KISIKIKEVK (72 aa). Residues 247–268 form a disordered region; that stretch reads KANERQSRAALNKKDGLSKDET.

This sequence belongs to the universal ribosomal protein uS3 family. As to quaternary structure, part of the 30S ribosomal subunit. Forms a tight complex with proteins S10 and S14.

In terms of biological role, binds the lower part of the 30S subunit head. Binds mRNA in the 70S ribosome, positioning it for translation. This chain is Small ribosomal subunit protein uS3, found in Borrelia garinii subsp. bavariensis (strain ATCC BAA-2496 / DSM 23469 / PBi) (Borreliella bavariensis).